The chain runs to 40 residues: Photosystem II reaction center protein J (40 aa).

The helical transmembrane segment at 8-28 (IPLWLIGTVTGILVIGLLGIF) threads the bilayer.

Belongs to the PsbJ family. PSII is composed of 1 copy each of membrane proteins PsbA, PsbB, PsbC, PsbD, PsbE, PsbF, PsbH, PsbI, PsbJ, PsbK, PsbL, PsbM, PsbT, PsbX, PsbY, PsbZ, Psb30/Ycf12, at least 3 peripheral proteins of the oxygen-evolving complex and a large number of cofactors. It forms dimeric complexes.

Its subcellular location is the plastid. It is found in the chloroplast thylakoid membrane. In terms of biological role, one of the components of the core complex of photosystem II (PSII). PSII is a light-driven water:plastoquinone oxidoreductase that uses light energy to abstract electrons from H(2)O, generating O(2) and a proton gradient subsequently used for ATP formation. It consists of a core antenna complex that captures photons, and an electron transfer chain that converts photonic excitation into a charge separation. In Angiopteris evecta (Mule's foot fern), this protein is Photosystem II reaction center protein J.